A 607-amino-acid chain; its full sequence is Elongation factor 4 (607 aa).

The 183-residue stretch at 6-188 (DRIRNFSIIA…AIVARIPAPK (183 aa)) folds into the tr-type G domain. GTP contacts are provided by residues 18–23 (DHGKST) and 135–138 (NKID).

It belongs to the TRAFAC class translation factor GTPase superfamily. Classic translation factor GTPase family. LepA subfamily.

Its subcellular location is the cell inner membrane. It catalyses the reaction GTP + H2O = GDP + phosphate + H(+). Its function is as follows. Required for accurate and efficient protein synthesis under certain stress conditions. May act as a fidelity factor of the translation reaction, by catalyzing a one-codon backward translocation of tRNAs on improperly translocated ribosomes. Back-translocation proceeds from a post-translocation (POST) complex to a pre-translocation (PRE) complex, thus giving elongation factor G a second chance to translocate the tRNAs correctly. Binds to ribosomes in a GTP-dependent manner. The polypeptide is Elongation factor 4 (Rhizorhabdus wittichii (strain DSM 6014 / CCUG 31198 / JCM 15750 / NBRC 105917 / EY 4224 / RW1) (Sphingomonas wittichii)).